We begin with the raw amino-acid sequence, 1213 residues long: uncharacterized protein (1213 aa).

The region spanning 289–390 (ATKRQGWLLR…WGSVINNARE (102 aa)) is the PH domain. In terms of domain architecture, VASt spans 776-945 (LDDIVFDRVY…EVNFLEKATR (170 aa)). 2 helical membrane-spanning segments follow: residues 996 to 1016 (LFLQ…FHIF) and 1025 to 1045 (FLVI…FCFG).

It localises to the cytoplasm. Its subcellular location is the nucleus membrane. The protein resides in the cytoskeleton. The protein localises to the microtubule organizing center. It is found in the spindle pole body. This is an uncharacterized protein from Schizosaccharomyces pombe (strain 972 / ATCC 24843) (Fission yeast).